The following is a 696-amino-acid chain: Methionine--tRNA ligase (696 aa).

A 'HIGH' region motif is present at residues proline 12–histidine 22. Positions 143, 146, 156, and 159 each coordinate Zn(2+). The 'KMSKS' region signature appears at lysine 330–serine 334. Lysine 333 provides a ligand contact to ATP. Residues aspartate 593 to arginine 696 enclose the tRNA-binding domain.

The protein belongs to the class-I aminoacyl-tRNA synthetase family. MetG type 1 subfamily. Homodimer. It depends on Zn(2+) as a cofactor.

It localises to the cytoplasm. It catalyses the reaction tRNA(Met) + L-methionine + ATP = L-methionyl-tRNA(Met) + AMP + diphosphate. Is required not only for elongation of protein synthesis but also for the initiation of all mRNA translation through initiator tRNA(fMet) aminoacylation. This Xanthomonas campestris pv. campestris (strain 8004) protein is Methionine--tRNA ligase.